The chain runs to 281 residues: ATP phosphoribosyltransferase (281 aa).

This sequence belongs to the ATP phosphoribosyltransferase family. Long subfamily. Mg(2+) is required as a cofactor.

The protein resides in the cytoplasm. The enzyme catalyses 1-(5-phospho-beta-D-ribosyl)-ATP + diphosphate = 5-phospho-alpha-D-ribose 1-diphosphate + ATP. Its pathway is amino-acid biosynthesis; L-histidine biosynthesis; L-histidine from 5-phospho-alpha-D-ribose 1-diphosphate: step 1/9. Feedback inhibited by histidine. In terms of biological role, catalyzes the condensation of ATP and 5-phosphoribose 1-diphosphate to form N'-(5'-phosphoribosyl)-ATP (PR-ATP). Has a crucial role in the pathway because the rate of histidine biosynthesis seems to be controlled primarily by regulation of HisG enzymatic activity. The chain is ATP phosphoribosyltransferase from Corynebacterium efficiens (strain DSM 44549 / YS-314 / AJ 12310 / JCM 11189 / NBRC 100395).